We begin with the raw amino-acid sequence, 177 residues long: MDLPGPIHDVLLVFLGSGLILGGLGVVLLTNPIYSAFSLGLVLVCISLFYILSNSYFVAAAQLLIYVGAVNVLIIFAVMFMNGSDYSNDFYLWTVGDGVTSLVCTSILFSLITTILDTSWYGIIWNTGSNQIVEQDLTSNVQQIGIHLSTDFYLPFELVSIILLVALIGAITMARQY.

5 helical membrane passes run 10–30, 32–52, 61–81, 90–112, and 152–172; these read VLLV…VLLT, PIYS…FYIL, AQLL…VMFM, FYLW…FSLI, and FYLP…GAIT.

It belongs to the complex I subunit 6 family. NDH is composed of at least 16 different subunits, 5 of which are encoded in the nucleus.

It localises to the plastid. The protein resides in the chloroplast thylakoid membrane. It catalyses the reaction a plastoquinone + NADH + (n+1) H(+)(in) = a plastoquinol + NAD(+) + n H(+)(out). The catalysed reaction is a plastoquinone + NADPH + (n+1) H(+)(in) = a plastoquinol + NADP(+) + n H(+)(out). In terms of biological role, NDH shuttles electrons from NAD(P)H:plastoquinone, via FMN and iron-sulfur (Fe-S) centers, to quinones in the photosynthetic chain and possibly in a chloroplast respiratory chain. The immediate electron acceptor for the enzyme in this species is believed to be plastoquinone. Couples the redox reaction to proton translocation, and thus conserves the redox energy in a proton gradient. This is NAD(P)H-quinone oxidoreductase subunit 6, chloroplastic (ndhG) from Acorus calamus var. americanus (American sweet flag).